We begin with the raw amino-acid sequence, 749 residues long: ATP-dependent zinc metalloprotease FtsH 3 (749 aa).

Basic and acidic residues predominate over residues 1–17 (MTGDPPERRSNGDRLPA). The interval 1 to 67 (MTGDPPERRS…GRNGGGMRPF (67 aa)) is disordered. At 1–75 (MTGDPPERRS…PFRFPGGRWG (75 aa)) the chain is on the cytoplasmic side. The helical transmembrane segment at 76-96 (ILVFILVLLGLNWWISSNALA) threads the bilayer. The Extracellular portion of the chain corresponds to 97 to 186 (PSERVRVPYS…NASPADNGPS (90 aa)). Residues 187 to 207 (LLVSILLGFGPVILIIALFVF) form a helical membrane-spanning segment. At 208-749 (LSRRMAGAAG…LGGSVRAGDA (542 aa)) the chain is on the cytoplasmic side. 281–288 (GQPGTGKT) contributes to the ATP binding site. His-504 provides a ligand contact to Zn(2+). Glu-505 is an active-site residue. His-508 and Asp-580 together coordinate Zn(2+). The span at 679–689 (GLEHMRPERVE) shows a compositional bias: basic and acidic residues. A disordered region spans residues 679 to 749 (GLEHMRPERV…LGGSVRAGDA (71 aa)).

The protein in the central section; belongs to the AAA ATPase family. It in the C-terminal section; belongs to the peptidase M41 family. Homohexamer. Requires Zn(2+) as cofactor.

The protein resides in the cell membrane. Its function is as follows. Acts as a processive, ATP-dependent zinc metallopeptidase for both cytoplasmic and membrane proteins. Plays a role in the quality control of integral membrane proteins. In Conexibacter woesei (strain DSM 14684 / CCUG 47730 / CIP 108061 / JCM 11494 / NBRC 100937 / ID131577), this protein is ATP-dependent zinc metalloprotease FtsH 3.